A 1061-amino-acid polypeptide reads, in one-letter code: Chimeric ERCC6-PGBD3 protein (1061 aa).

The tract at residues 1-39 is disordered; it reads MPNEGIPHSSQTQEQDCLQSQPVSNNEEMAIKQESGGDG. Over residues 8–27 the composition is skewed to polar residues; the sequence is HSSQTQEQDCLQSQPVSNNE. S158 bears the Phosphoserine mark. K255 is covalently cross-linked (Glycyl lysine isopeptide (Lys-Gly) (interchain with G-Cter in SUMO2)). Disordered regions lie at residues 287 to 323, 344 to 466, 494 to 521, and 537 to 573; these read KQGC…VLSK, GKVG…QRLS, VIQP…INNL, and SDAE…SRRR. Residues 353 to 363 show a composition bias toward basic and acidic residues; the sequence is RPWESDMRPEA. Over residues 364 to 392 the composition is skewed to acidic residues; it reads EGDSEGEESEYFPTEEEEEEEDDEVEGAE. Phosphoserine occurs at positions 429 and 430. Over residues 451-462 the composition is skewed to basic and acidic residues; the sequence is RYRDDGDEDYYK. A compositionally biased stretch (acidic residues) spans 506–515; the sequence is SDEESGDEEG. S554 bears the Phosphoserine mark.

Expressed in heart and oocytes, but not in granulosa cells (at protein level).

It localises to the nucleus. Functionally, involved in repair of DNA damage following UV irradiation, acting either in the absence of ERCC6 or synergistically with ERCC6. Involved in the regulation of gene expression. In the absence of ERCC6, induces the expression of genes characteristic of interferon-like antiviral responses. This response is almost completely suppressed in the presence of ERCC6. In the presence of ERCC6, regulates the expression of genes involved in metabolism regulation, including IGFBP5 and IGFBP7. In vitro binds to PGBD3-related transposable elements, called MER85s; these non-autonomous 140 bp elements are characterized by the presence of PGBD3 terminal inverted repeats and the absence of internal transposase ORF. This is Chimeric ERCC6-PGBD3 protein from Homo sapiens (Human).